The sequence spans 329 residues: Secretory carrier-associated membrane protein 2 (329 aa).

Disordered regions lie at residues 1-21 (MSAF…FQDP) and 51-72 (VTQL…PTQP). Residues 1–153 (MSAFDTNPFA…DYQRICKMLY (153 aa)) lie on the Cytoplasmic side of the membrane. Residues 154–174 (YLWMLHSVTLFLNLLACLAWF) traverse the membrane as a helical segment. Residues 175-181 (SGNSSKG) are Lumenal-facing. Residues 182–202 (VDFGLSILWFLIFTPCAFLCW) form a helical membrane-spanning segment. Residues 203-218 (YRPIYKAFRSDNSFSF) are Cytoplasmic-facing. The tract at residues 203 to 218 (YRPIYKAFRSDNSFSF) is interaction with SLC9A7. The helical transmembrane segment at 219–239 (FVFFFVFFCQIGIYIIQLVGI) threads the bilayer. Over 240-262 (PGLGDSGWIAALSTLDNHSLAIS) the chain is Lumenal. A helical transmembrane segment spans residues 263-283 (VIMMVVAGFFTLCAVLSVFLL). Over 284–329 (QRVHSLYRRTGASFQQAQEEFSQGIFSSRTFHRAASSAAQGAFQGN) the chain is Cytoplasmic. Residues Ser319 and Ser320 each carry the phosphoserine modification.

It belongs to the SCAMP family. Interacts with SLC6A4 and SLC9A7. Interacts with SLC9A5; this interaction regulates SLC9A5 cell-surface targeting and SLC9A5 activity. As to expression, widely expressed.

It localises to the golgi apparatus. The protein resides in the trans-Golgi network membrane. It is found in the recycling endosome membrane. Its function is as follows. Functions in post-Golgi recycling pathways. Acts as a recycling carrier to the cell surface. The chain is Secretory carrier-associated membrane protein 2 (SCAMP2) from Homo sapiens (Human).